A 350-amino-acid polypeptide reads, in one-letter code: Histidinol-phosphate aminotransferase 1 (350 aa).

The residue at position 211 (K211) is an N6-(pyridoxal phosphate)lysine.

This sequence belongs to the class-II pyridoxal-phosphate-dependent aminotransferase family. Histidinol-phosphate aminotransferase subfamily. In terms of assembly, homodimer. Pyridoxal 5'-phosphate is required as a cofactor.

The catalysed reaction is L-histidinol phosphate + 2-oxoglutarate = 3-(imidazol-4-yl)-2-oxopropyl phosphate + L-glutamate. It participates in amino-acid biosynthesis; L-histidine biosynthesis; L-histidine from 5-phospho-alpha-D-ribose 1-diphosphate: step 7/9. The sequence is that of Histidinol-phosphate aminotransferase 1 from Trichormus variabilis (strain ATCC 29413 / PCC 7937) (Anabaena variabilis).